The sequence spans 283 residues: Protein BASIC PENTACYSTEINE1 (283 aa).

A disordered region spans residues 111–170 (RFEENPIPPPAPCEEQTGKKRKMRGSIATPTVPKAKKMRKPKEERDVTNNNVQQQQQRVK). Residues 158–169 (TNNNVQQQQQRV) are compositionally biased toward low complexity.

The protein belongs to the BBR/BPC family. Expressed in seedlings, leaves and pistils. Detected in the base of flowers and tips of carpels, in leaf and sepal vasculature, in young rosette, in the lateral and tip of primary roots, and in the whole ovule.

It is found in the nucleus. Its function is as follows. Transcriptional regulator that specifically binds to GA-rich elements (GAGA-repeats) present in regulatory sequences of genes involved in developmental processes. Negatively regulates the homeotic gene AGL11/STK, which controls ovule primordium identity, by a cooperative binding to purine-rich elements present in the regulatory sequence leading to DNA conformational changes. The polypeptide is Protein BASIC PENTACYSTEINE1 (BPC1) (Arabidopsis thaliana (Mouse-ear cress)).